We begin with the raw amino-acid sequence, 96 residues long: Conotoxin Mr15.1 (96 aa).

Positions 1–20 are cleaved as a signal peptide; sequence MSTLKMMLLILLLLLPLATF. A propeptide spanning residues 21-57 is cleaved from the precursor; it reads DSDGQAIPGGGIPSAVNSRVGRLLGGDEKSGRSLEKR.

Belongs to the conotoxin N superfamily. Post-translationally, contains 4 disulfide bonds. Expressed by the venom duct.

It localises to the secreted. This is Conotoxin Mr15.1 from Conus marmoreus (Marble cone).